The following is a 565-amino-acid chain: VFLSMRNKTQLAKRRATNYETHRNSSRTSSPIVCSTGMPIIFVATEVHPWCKTGGLGDVVGGLPPALAAMGHRVMTIAPRYDQYKDTWDTNVLVEVIVGDRTETVRFFHCYKRGVDRVFVDHPMFLEKVWGKTGSKLYGPTTGTDFRDNQLRFCLLCLAALEAPRVLNLNNSEYFSGPYGENVVFVANDWHTAVLPCYLKSMYKQNGIYENAKVAFCIHNIAYQGRFPRADFELLNLPESFMPSFDFVDGHVKPVVGRKINWMKAGITECDVVLTVSPHYVKELTSGPEKGVELDGVLRTKPLETGIVNGMDVIDWNPATDKYISVKYNATTVAQARALNKEILQAEVGLSVDSSIPVIVFIGRLEEQKGSDILIAASPEFVEENVQIIVLGTGKKKMEEELMLLEVKYPQNARGIAKFNVPLAHMMFAGADFIIIPSRFEPCGLIQLQGMSYGVVPICSSTGGLVDTVREGVTGFHMGSFNVEFETVDPTDVAAVGSNVTRALKQYRTPVFHAMVQNCMAQDLSWKGPAKKWEEALLSLGVEGSQPGIEGEEIAPLAKQNVATP.

The N-terminal 34 residues, 1-34 (VFLSMRNKTQLAKRRATNYETHRNSSRTSSPIVC), are a transit peptide targeting the chloroplast. Lys-52 contributes to the ADP-alpha-D-glucose binding site.

It belongs to the glycosyltransferase 1 family. Bacterial/plant glycogen synthase subfamily.

It is found in the plastid. Its subcellular location is the chloroplast. The protein resides in the amyloplast. The catalysed reaction is an NDP-alpha-D-glucose + [(1-&gt;4)-alpha-D-glucosyl](n) = [(1-&gt;4)-alpha-D-glucosyl](n+1) + a ribonucleoside 5'-diphosphate + H(+). Its pathway is glycan biosynthesis; starch biosynthesis. Functionally, involved in the synthesis of amylose in endosperm. This chain is Granule-bound starch synthase 1b, chloroplastic/amyloplastic, found in Hordeum vulgare (Barley).